The primary structure comprises 153 residues: Ribonuclease H (153 aa).

One can recognise an RNase H type-1 domain in the interval 1–141 (MKHIEIYTDG…CDVLARDAAS (141 aa)). Mg(2+)-binding residues include Asp-9, Glu-47, Asp-69, and Asp-133.

The protein belongs to the RNase H family. Monomer. Mg(2+) is required as a cofactor.

The protein resides in the cytoplasm. The enzyme catalyses Endonucleolytic cleavage to 5'-phosphomonoester.. Its function is as follows. Endonuclease that specifically degrades the RNA of RNA-DNA hybrids. In Pseudoalteromonas atlantica (strain T6c / ATCC BAA-1087), this protein is Ribonuclease H.